The following is a 212-amino-acid chain: Telomere repeats-binding bouquet formation protein 2 (212 aa).

The protein belongs to the TERB2 family. Component of the MAJIN-TERB1-TERB2 complex.

Its function is as follows. Meiosis-specific telomere-associated protein involved in meiotic telomere attachment to the nucleus inner membrane, a crucial step for homologous pairing and synapsis. Component of the MAJIN-TERB1-TERB2 complex, which promotes telomere cap exchange by mediating attachment of telomeric DNA to the inner nuclear membrane and replacement of the protective cap of telomeric chromosomes: in early meiosis, the MAJIN-TERB1-TERB2 complex associates with telomeric DNA and the shelterin/telosome complex. During prophase, the complex matures and promotes release of the shelterin/telosome complex from telomeric DNA. The protein is Telomere repeats-binding bouquet formation protein 2 of Danio rerio (Zebrafish).